The sequence spans 140 residues: Putative nickel-responsive regulator (140 aa).

4 residues coordinate Ni(2+): histidine 76, histidine 87, histidine 89, and cysteine 95.

The protein belongs to the transcriptional regulatory CopG/NikR family. The cofactor is Ni(2+).

In terms of biological role, transcriptional regulator. The chain is Putative nickel-responsive regulator from Rhodopseudomonas palustris (strain BisB5).